We begin with the raw amino-acid sequence, 646 residues long: Long-chain fatty acid transport protein 1 (646 aa).

Residues 1 to 13 (MRAPGAGAASVVS) lie on the Extracellular side of the membrane. A helical membrane pass occupies residues 14–34 (LALLWLLGLPWTWSAAAALGV). The Cytoplasmic segment spans residues 35–646 (YVGSGGWRFL…TRICSGAFAL (612 aa)). The interval 191 to 475 (EVSGHLGKSL…YVSESATSKK (285 aa)) is sufficient for oligomerization. 246 to 257 (YIYTSGTTGLPK) contributes to the AMP binding site.

This sequence belongs to the ATP-dependent AMP-binding enzyme family. As to quaternary structure, self-associates. May function as a homodimer. Interacts with EPRS1; mediates the translocation of SLC27A1 from the cytoplasm to the plasma membrane thereby increasing the uptake of long-chain fatty acids. Interacts with DGAT2 and this interaction is enhanced in the presence of ZFYVE1. In terms of tissue distribution, highest levels of expression are detected in muscle and adipose tissue small, intermediate levels in small intestine, and barely detectable in liver. Expressed in brain gray matter.

It localises to the cell membrane. It is found in the endomembrane system. The protein localises to the cytoplasm. It carries out the reaction a fatty acid(in) = a fatty acid(out). The catalysed reaction is (9Z)-octadecenoate(out) = (9Z)-octadecenoate(in). The enzyme catalyses hexadecanoate(out) = hexadecanoate(in). It catalyses the reaction (9Z,12Z)-octadecadienoate(out) = (9Z,12Z)-octadecadienoate(in). It carries out the reaction (5Z,8Z,11Z,14Z)-eicosatetraenoate(out) = (5Z,8Z,11Z,14Z)-eicosatetraenoate(in). The catalysed reaction is a long-chain fatty acid + ATP + CoA = a long-chain fatty acyl-CoA + AMP + diphosphate. The enzyme catalyses (5Z,8Z,11Z,14Z)-eicosatetraenoate + ATP + CoA = (5Z,8Z,11Z,14Z)-eicosatetraenoyl-CoA + AMP + diphosphate. It catalyses the reaction a very long-chain fatty acid + ATP + CoA = a very long-chain fatty acyl-CoA + AMP + diphosphate. It carries out the reaction tetracosanoate + ATP + CoA = tetracosanoyl-CoA + AMP + diphosphate. Its activity is regulated as follows. Inhibited by Triacsin C. Functionally, mediates the import of long-chain fatty acids (LCFA) into the cell by facilitating their transport at the plasma membrane. Also functions as an acyl-CoA ligase catalyzing the ATP-dependent formation of fatty acyl-CoA using LCFA and very-long-chain fatty acids (VLCFA) as substrates, which prevents fatty acid efflux from cells and might drive more fatty acid uptake. May act directly as a bona fide transporter, or alternatively, in a cytoplasmic or membrane-associated multimeric protein complex to trap and draw fatty acids towards accumulation. Plays a pivotal role in regulating available LCFA substrates from exogenous sources in tissues undergoing high levels of beta-oxidation or triglyceride synthesis. May be involved in regulation of cholesterol metabolism. Probably involved in fatty acid transport across the blood barrier. The polypeptide is Long-chain fatty acid transport protein 1 (Homo sapiens (Human)).